Here is a 190-residue protein sequence, read N- to C-terminus: MILKLVLYDNPILRKKGMPIDSFDDRLKRLVQDMLETMAYYKGVGLAAQQVGLNLQLAVIDVSGSKLSSSLLIGGKPAMVEEHMPLFLINPTLSYTQSKEISNEGCLSFPGLRIDVPRSKRVKVKTFDLEGRPWYFEAGGFLSVAIQHEFDHLQGKLFIDYLSAEQKKAIKEELEKIKRGEAILSVKETD.

Fe cation-binding residues include Cys106 and His148. Glu149 is a catalytic residue. Residue His152 participates in Fe cation binding.

The protein belongs to the polypeptide deformylase family. Requires Fe(2+) as cofactor.

It catalyses the reaction N-terminal N-formyl-L-methionyl-[peptide] + H2O = N-terminal L-methionyl-[peptide] + formate. Functionally, removes the formyl group from the N-terminal Met of newly synthesized proteins. Requires at least a dipeptide for an efficient rate of reaction. N-terminal L-methionine is a prerequisite for activity but the enzyme has broad specificity at other positions. The sequence is that of Peptide deformylase from Methylacidiphilum infernorum (isolate V4) (Methylokorus infernorum (strain V4)).